Reading from the N-terminus, the 165-residue chain is Chorismate pyruvate-lyase (165 aa).

Substrate is bound by residues M35, R77, L115, and E156.

Belongs to the UbiC family. Monomer.

It is found in the cytoplasm. It carries out the reaction chorismate = 4-hydroxybenzoate + pyruvate. It participates in cofactor biosynthesis; ubiquinone biosynthesis. Functionally, removes the pyruvyl group from chorismate, with concomitant aromatization of the ring, to provide 4-hydroxybenzoate (4HB) for the ubiquinone pathway. This chain is Chorismate pyruvate-lyase, found in Escherichia coli O127:H6 (strain E2348/69 / EPEC).